A 148-amino-acid polypeptide reads, in one-letter code: MFRGSTQLNLDSKGRLAIPAKYRNELFANCGGNIVVTADPSRCLLIYPQPVWEPIEKKLSGFSSFNPQIRSLQRLIIGNACDVEMDGSGRILISAPLRQFAGLQKEVVLAGQGEKFELWDMAKWDLEIDTATACKDGDIPPELEGFSL.

SpoVT-AbrB domains are found at residues 5-51 and 80-123; these read STQL…PQPV and ACDV…DMAK.

It belongs to the MraZ family. In terms of assembly, forms oligomers.

Its subcellular location is the cytoplasm. The protein resides in the nucleoid. This chain is Transcriptional regulator MraZ, found in Nitrosomonas eutropha (strain DSM 101675 / C91 / Nm57).